A 542-amino-acid polypeptide reads, in one-letter code: ATP synthase subunit alpha (542 aa).

ATP is bound at residue 173 to 180 (GDRQTGKT). Positions 518–542 (PLVEKKPDEKHTTPVEQEKIVAGEK) are disordered. The segment covering 519-542 (LVEKKPDEKHTTPVEQEKIVAGEK) has biased composition (basic and acidic residues).

The protein belongs to the ATPase alpha/beta chains family. As to quaternary structure, F-type ATPases have 2 components, CF(1) - the catalytic core - and CF(0) - the membrane proton channel. CF(1) has five subunits: alpha(3), beta(3), gamma(1), delta(1), epsilon(1). CF(0) has three main subunits: a(1), b(2) and c(9-12). The alpha and beta chains form an alternating ring which encloses part of the gamma chain. CF(1) is attached to CF(0) by a central stalk formed by the gamma and epsilon chains, while a peripheral stalk is formed by the delta and b chains.

It is found in the cell membrane. The enzyme catalyses ATP + H2O + 4 H(+)(in) = ADP + phosphate + 5 H(+)(out). Produces ATP from ADP in the presence of a proton gradient across the membrane. The alpha chain is a regulatory subunit. In Bifidobacterium adolescentis (strain ATCC 15703 / DSM 20083 / NCTC 11814 / E194a), this protein is ATP synthase subunit alpha.